The sequence spans 281 residues: MAQKIIKVRDIEIANDKPFVLFGGINVLESRDLAMQACEEYVRVTEKLGIPYVFKASFDKANRSSITSFRGPGLEEGMKIFEEVKKTFGVPVITDVHEPHQAAAVAEVCDIIQLPAFLSRQTDLVVAMAKTGAVINIKKAQFLAPQEMKHILTKCEEAGNDQLILCERGSSFGYNNLVVDMLGFGIMKQFEYPVFFDVTHALQMPGGRADSAGGRRAQVTDLAKAGMSQGLAGLFLEAHPDPENAKCDGPCALRLNKLEPFLSQLKQLDDLVKSFPPIETA.

This sequence belongs to the KdsA family.

The protein localises to the cytoplasm. It catalyses the reaction D-arabinose 5-phosphate + phosphoenolpyruvate + H2O = 3-deoxy-alpha-D-manno-2-octulosonate-8-phosphate + phosphate. The protein operates within carbohydrate biosynthesis; 3-deoxy-D-manno-octulosonate biosynthesis; 3-deoxy-D-manno-octulosonate from D-ribulose 5-phosphate: step 2/3. It participates in bacterial outer membrane biogenesis; lipopolysaccharide biosynthesis. This chain is 2-dehydro-3-deoxyphosphooctonate aldolase, found in Ectopseudomonas mendocina (strain ymp) (Pseudomonas mendocina).